The following is a 101-amino-acid chain: Large ribosomal subunit protein eL43 (101 aa).

A C4-type zinc finger spans residues 40–62 (CPSCRSLVRLQRIAFGIWKCPKC).

Belongs to the eukaryotic ribosomal protein eL43 family. Zn(2+) is required as a cofactor.

The chain is Large ribosomal subunit protein eL43 from Pyrobaculum neutrophilum (strain DSM 2338 / JCM 9278 / NBRC 100436 / V24Sta) (Thermoproteus neutrophilus).